Here is an 80-residue protein sequence, read N- to C-terminus: Acyl carrier protein (80 aa).

In terms of domain architecture, Carrier spans 4–79; that stretch reads EAILEKVRSI…DAVKYIEDKQ (76 aa). The residue at position 39 (S39) is an O-(pantetheine 4'-phosphoryl)serine.

The protein belongs to the acyl carrier protein (ACP) family. 4'-phosphopantetheine is transferred from CoA to a specific serine of apo-ACP by AcpS. This modification is essential for activity because fatty acids are bound in thioester linkage to the sulfhydryl of the prosthetic group.

The protein resides in the cytoplasm. Its pathway is lipid metabolism; fatty acid biosynthesis. Carrier of the growing fatty acid chain in fatty acid biosynthesis. This Synechococcus sp. (strain CC9902) protein is Acyl carrier protein.